Consider the following 165-residue polypeptide: Biosynthetic peptidoglycan transglycosylase (165 aa).

It belongs to the glycosyltransferase 51 family.

The protein localises to the cell inner membrane. It carries out the reaction [GlcNAc-(1-&gt;4)-Mur2Ac(oyl-L-Ala-gamma-D-Glu-L-Lys-D-Ala-D-Ala)](n)-di-trans,octa-cis-undecaprenyl diphosphate + beta-D-GlcNAc-(1-&gt;4)-Mur2Ac(oyl-L-Ala-gamma-D-Glu-L-Lys-D-Ala-D-Ala)-di-trans,octa-cis-undecaprenyl diphosphate = [GlcNAc-(1-&gt;4)-Mur2Ac(oyl-L-Ala-gamma-D-Glu-L-Lys-D-Ala-D-Ala)](n+1)-di-trans,octa-cis-undecaprenyl diphosphate + di-trans,octa-cis-undecaprenyl diphosphate + H(+). It participates in cell wall biogenesis; peptidoglycan biosynthesis. Peptidoglycan polymerase that catalyzes glycan chain elongation from lipid-linked precursors. This is Biosynthetic peptidoglycan transglycosylase from Neisseria meningitidis.